The chain runs to 294 residues: 33 kDa chaperonin (294 aa).

Cystine bridges form between C239-C241 and C272-C275.

It belongs to the HSP33 family. Post-translationally, under oxidizing conditions two disulfide bonds are formed involving the reactive cysteines. Under reducing conditions zinc is bound to the reactive cysteines and the protein is inactive.

Its subcellular location is the cytoplasm. In terms of biological role, redox regulated molecular chaperone. Protects both thermally unfolding and oxidatively damaged proteins from irreversible aggregation. Plays an important role in the bacterial defense system toward oxidative stress. This is 33 kDa chaperonin from Listeria monocytogenes serotype 4a (strain HCC23).